The sequence spans 359 residues: UDP-3-O-acylglucosamine N-acyltransferase (359 aa).

H253 functions as the Proton acceptor in the catalytic mechanism.

It belongs to the transferase hexapeptide repeat family. LpxD subfamily. In terms of assembly, homotrimer.

It carries out the reaction a UDP-3-O-[(3R)-3-hydroxyacyl]-alpha-D-glucosamine + a (3R)-hydroxyacyl-[ACP] = a UDP-2-N,3-O-bis[(3R)-3-hydroxyacyl]-alpha-D-glucosamine + holo-[ACP] + H(+). It functions in the pathway bacterial outer membrane biogenesis; LPS lipid A biosynthesis. Its function is as follows. Catalyzes the N-acylation of UDP-3-O-acylglucosamine using 3-hydroxyacyl-ACP as the acyl donor. Is involved in the biosynthesis of lipid A, a phosphorylated glycolipid that anchors the lipopolysaccharide to the outer membrane of the cell. In Burkholderia lata (strain ATCC 17760 / DSM 23089 / LMG 22485 / NCIMB 9086 / R18194 / 383), this protein is UDP-3-O-acylglucosamine N-acyltransferase.